The chain runs to 77 residues: Acyl carrier protein (77 aa).

In terms of domain architecture, Carrier spans 2–77 (SEKLQKIQAL…DAVAYIEERS (76 aa)). Serine 37 carries the O-(pantetheine 4'-phosphoryl)serine modification.

Belongs to the acyl carrier protein (ACP) family. 4'-phosphopantetheine is transferred from CoA to a specific serine of apo-ACP by AcpS. This modification is essential for activity because fatty acids are bound in thioester linkage to the sulfhydryl of the prosthetic group.

It is found in the cytoplasm. Its pathway is lipid metabolism; fatty acid biosynthesis. Functionally, carrier of the growing fatty acid chain in fatty acid biosynthesis. The protein is Acyl carrier protein of Desulforudis audaxviator (strain MP104C).